The primary structure comprises 492 residues: Auxin transporter-like protein 1 (492 aa).

The Cytoplasmic segment spans residues 1–67; sequence MVPREQAEEA…DAWFSCASNQ (67 aa). Residues 68-85 form a helical membrane-spanning segment; the sequence is VAQVLLTLPYSFSQLGML. Topologically, residues 86–87 are extracellular; that stretch reads SG. Residues 88-108 traverse the membrane as a helical segment; the sequence is VLLQLFYGFMGSWTAYLISVL. The Cytoplasmic portion of the chain corresponds to 109-143; it reads YVEYRSRKEKEGVSFKNHVIQWFEVLDGLLGPYWK. Residues 144 to 164 form a helical membrane-spanning segment; that stretch reads AAGLAFNCTFLLFGSVIQLIA. Residues 165–180 lie on the Extracellular side of the membrane; it reads CASNIYYINDRLDKRT. A helical membrane pass occupies residues 181 to 201; sequence WTYIFGACCATTVFIPSFHNY. Residue Arg-202 is a topological domain, cytoplasmic. The helical transmembrane segment at 203–223 threads the bilayer; that stretch reads IWSFLGLGMTTYTAWYLAIAA. Residues 224-240 are Extracellular-facing; that stretch reads LLNGQAEGITHTGPTKL. A helical transmembrane segment spans residues 241-261; the sequence is VLYFTGATNILYTFGGHAVTV. The Cytoplasmic portion of the chain corresponds to 262 to 274; the sequence is EIMHAMWKPAKFK. A helical transmembrane segment spans residues 275 to 295; that stretch reads YIYLLATLYVFTLTLPSASAM. Over 296–322 the chain is Extracellular; that stretch reads YWAFGDELLTHSNAFSLLPKTGWRDAA. The helical transmembrane segment at 323 to 343 threads the bilayer; sequence VILMLIHQFITFGFACTPLYF. At 344–364 the chain is on the cytoplasmic side; that stretch reads VWEKVIGMHDTKSICLRALAR. A helical membrane pass occupies residues 365 to 385; the sequence is LPIVVPIWFLAIIFPFFGPIN. Ser-386 is a topological domain (extracellular). The helical transmembrane segment at 387–407 threads the bilayer; that stretch reads AVGALLVSFTVYIIPALAHIL. The Cytoplasmic portion of the chain corresponds to 408 to 432; that stretch reads TYRTASARMNAAEKPPFFLPSWTGM. Residues 433–453 traverse the membrane as a helical segment; the sequence is FVLNMFIVVWVLVVGFGLGGW. Topologically, residues 454 to 492 are extracellular; the sequence is ASMVNFIRQIDTFGLFAKCYQCPKPAPALAQSPVPLPHH.

It belongs to the amino acid/polyamine transporter 2 family. Amino acid/auxin permease (AAAP) (TC 2.A.18.1) subfamily.

The protein resides in the cell membrane. In terms of biological role, carrier protein involved in proton-driven auxin influx. May mediate the formation of auxin gradient from developing leaves (site of auxin biosynthesis) to tips. The chain is Auxin transporter-like protein 1 from Oryza sativa subsp. japonica (Rice).